The sequence spans 435 residues: Enolase (435 aa).

Substrate contacts are provided by His155 and Glu164. Glu205 (proton donor) is an active-site residue. Residues Asp243, Glu292, and Asp319 each coordinate Mg(2+). Substrate contacts are provided by residues Glu292, Asp319, Lys344, 371 to 374 (SHRS), and Lys395. Lys344 serves as the catalytic Proton acceptor.

The protein belongs to the enolase family. Homooctamer. It depends on Mg(2+) as a cofactor.

The protein resides in the cytoplasm. Its subcellular location is the secreted. It is found in the cell surface. It carries out the reaction (2R)-2-phosphoglycerate = phosphoenolpyruvate + H2O. Its pathway is carbohydrate degradation; glycolysis; pyruvate from D-glyceraldehyde 3-phosphate: step 4/5. Its function is as follows. Catalyzes the reversible conversion of 2-phosphoglycerate (2-PG) into phosphoenolpyruvate (PEP). It is essential for the degradation of carbohydrates via glycolysis. 'Moonlights' as a plasminogen receptor and plasmin activator. Binds host (human) plasminogen in vitro; enhances the activity of host tissue-specific plasminogen activator (tPA). This chain is Enolase, found in Streptococcus pyogenes serotype M1.